An 88-amino-acid chain; its full sequence is Small cysteine and glycine repeat-containing protein 1 (88 aa).

Positions 4–72 (CGCGGCGGCG…TCSSCGYSCG (69 aa)) are 10 X 2 AA repeats of CG.

The protein belongs to the KRTAP type 28 family.

Functionally, in the hair cortex, hair keratin intermediate filaments are embedded in an interfilamentous matrix, consisting of hair keratin-associated proteins (KRTAP), which are essential for the formation of a rigid and resistant hair shaft through their extensive disulfide bond cross-linking with abundant cysteine residues of hair keratins. The matrix proteins include the high-sulfur and high-glycine-tyrosine keratins. The chain is Small cysteine and glycine repeat-containing protein 1 from Homo sapiens (Human).